Consider the following 510-residue polypeptide: NAD(P)H-quinone oxidoreductase subunit 2 B, chloroplastic (510 aa).

Helical transmembrane passes span 24 to 44 (LLLFNGSFIFPECILIFGLIL), 59 to 79 (WFYFISSTSLVISITALLFRW), 99 to 119 (IFQFLILLCSTLCIPLSVEYI), 124 to 144 (MAITEFLLFILTATLGGMFLC), 149 to 169 (LITIFVAPECFSLCSYLLSGY), 183 to 203 (YLLMGGASSSILVHGFSWLYG), 229 to 249 (ISIALISITVGLGFKLSPAPF), 295 to 315 (WHLLLEILAILSMILGNLLAI), 323 to 343 (MLAYSSIGQIGYVIIGIIVGD), 354 to 374 (YMLFYISMNLGTFACIVLFGL), 395 to 415 (ALSLALCLLSLGGLPPLAGFF), and 418 to 438 (LYLFWCGWQAGLYFLVSIGLL).

Belongs to the complex I subunit 2 family. NDH is composed of at least 16 different subunits, 5 of which are encoded in the nucleus.

The protein resides in the plastid. It is found in the chloroplast thylakoid membrane. It catalyses the reaction a plastoquinone + NADH + (n+1) H(+)(in) = a plastoquinol + NAD(+) + n H(+)(out). The catalysed reaction is a plastoquinone + NADPH + (n+1) H(+)(in) = a plastoquinol + NADP(+) + n H(+)(out). Functionally, NDH shuttles electrons from NAD(P)H:plastoquinone, via FMN and iron-sulfur (Fe-S) centers, to quinones in the photosynthetic chain and possibly in a chloroplast respiratory chain. The immediate electron acceptor for the enzyme in this species is believed to be plastoquinone. Couples the redox reaction to proton translocation, and thus conserves the redox energy in a proton gradient. This chain is NAD(P)H-quinone oxidoreductase subunit 2 B, chloroplastic, found in Lolium perenne (Perennial ryegrass).